The primary structure comprises 335 residues: Beta-ketoacyl-[acyl-carrier-protein] synthase III (335 aa).

Active-site residues include cysteine 119 and histidine 261. The tract at residues 262–266 (QANQR) is ACP-binding. Residue asparagine 291 is part of the active site.

This sequence belongs to the thiolase-like superfamily. FabH family. As to quaternary structure, homodimer.

It is found in the cytoplasm. It catalyses the reaction malonyl-[ACP] + acetyl-CoA + H(+) = 3-oxobutanoyl-[ACP] + CO2 + CoA. Its pathway is lipid metabolism; fatty acid biosynthesis. Functionally, catalyzes the condensation reaction of fatty acid synthesis by the addition to an acyl acceptor of two carbons from malonyl-ACP. Catalyzes the first condensation reaction which initiates fatty acid synthesis and may therefore play a role in governing the total rate of fatty acid production. Possesses both acetoacetyl-ACP synthase and acetyl transacylase activities. Its substrate specificity determines the biosynthesis of branched-chain and/or straight-chain of fatty acids. The polypeptide is Beta-ketoacyl-[acyl-carrier-protein] synthase III (Prochlorococcus marinus subsp. pastoris (strain CCMP1986 / NIES-2087 / MED4)).